A 739-amino-acid polypeptide reads, in one-letter code: MPNMEPTTKEIKEQKIYQEMGLTDSEYELVCSILGREPNYTETGLFSVMWSEHCSYKNSKPVLRKFPTEGKQVLQGPGEGAGIVDIGDGLGVAFKVESHNHPSYVEPYQGAATGVGGIIRDVFSMGARPIAMLNSLRFGELDTPHSKYLVSEVVAGIAGYGNSIGIPTVGGEIQFDPCYTKNPLVNAMCVGLIEAKDIQKGQAKGIGNPVMYVGAKTGRDGIHGATFASVEFSEEGEQQRSAVQVGDPFMEKLLLEACLDVIRDHSDILVGIQDMGAAGLVSSSSEMASKAGAGLELIMDDVPQRELNMTPYEMLLSESQERMLLCVKKGHVDEIQALFDRYGLEAVVIGKVTDDKMYKIIHHGEVVANVPVDALAEDAPVYHKPSTEPARYQAFQEEQPFVPVMEDVVEVWKELLAQPTIASKRHIYEQYDYQVRTDTAVVPGSDAAIVRVRGTEKAIAMTTDCNSRYLYLDPEVGGAIAVAEAARNIVCSGGKPLAITDGLNFGNPEKPEIFWEIEKAADGISAACLELDTPVISGNVSLYNETDGTGIYPTPVIGMVGLVEDLAHITTQDFKNSGDVIFLIGETKAEYNGSELQKLQQGKISGRAPELDLTTEKKYQELLLTAIREGLVSSSHDLAEGGFGVALAEATFKAGLGADVEVPFALNQLFSESQSRFLVSVKPENEAVFAKIMEQEKVYRLGVVTADETIRVKYKEEEVTASTTDLRSIWEGAIPCLLK.

Residue His53 is part of the active site. Residues Tyr56 and Lys95 each coordinate ATP. Position 97 (Glu97) interacts with Mg(2+). Substrate-binding positions include 98-101 and Arg120; that span reads SHNH. The active-site Proton acceptor is the His99. A Mg(2+)-binding site is contributed by Asp121. Gln244 is a substrate binding site. Asp274 is a Mg(2+) binding site. Residue 318-320 participates in substrate binding; the sequence is ESQ. Residues Asp501 and Gly538 each contribute to the ATP site. Residue Asn539 participates in Mg(2+) binding. Ser541 contacts substrate.

Belongs to the FGAMS family. As to quaternary structure, monomer. Part of the FGAM synthase complex composed of 1 PurL, 1 PurQ and 2 PurS subunits.

It is found in the cytoplasm. The catalysed reaction is N(2)-formyl-N(1)-(5-phospho-beta-D-ribosyl)glycinamide + L-glutamine + ATP + H2O = 2-formamido-N(1)-(5-O-phospho-beta-D-ribosyl)acetamidine + L-glutamate + ADP + phosphate + H(+). Its pathway is purine metabolism; IMP biosynthesis via de novo pathway; 5-amino-1-(5-phospho-D-ribosyl)imidazole from N(2)-formyl-N(1)-(5-phospho-D-ribosyl)glycinamide: step 1/2. In terms of biological role, part of the phosphoribosylformylglycinamidine synthase complex involved in the purines biosynthetic pathway. Catalyzes the ATP-dependent conversion of formylglycinamide ribonucleotide (FGAR) and glutamine to yield formylglycinamidine ribonucleotide (FGAM) and glutamate. The FGAM synthase complex is composed of three subunits. PurQ produces an ammonia molecule by converting glutamine to glutamate. PurL transfers the ammonia molecule to FGAR to form FGAM in an ATP-dependent manner. PurS interacts with PurQ and PurL and is thought to assist in the transfer of the ammonia molecule from PurQ to PurL. The polypeptide is Phosphoribosylformylglycinamidine synthase subunit PurL (Listeria welshimeri serovar 6b (strain ATCC 35897 / DSM 20650 / CCUG 15529 / CIP 8149 / NCTC 11857 / SLCC 5334 / V8)).